Here is a 549-residue protein sequence, read N- to C-terminus: Teichoic acids export ATP-binding protein TagH (549 aa).

Residues 22–243 (DKLKDLFFRS…YDEFLKKYNQ (222 aa)) enclose the ABC transporter domain. 57–64 (GLNGSGKS) contributes to the ATP binding site. The interval 244–549 (MSVEERKDLR…EIQSISIVKK (306 aa)) is unknown. In terms of domain architecture, SH3b spans 346–415 (AAKYIVNSNG…ISTKFIEPFK (70 aa)).

The protein belongs to the ABC transporter superfamily. Teichoic acids exporter (TC 3.A.1.104.1) family. As to quaternary structure, the complex is composed of two ATP-binding proteins (TagH) and two transmembrane proteins (TagG).

It is found in the cell membrane. It carries out the reaction ATP + H2O + teichoic acidSide 1 = ADP + phosphate + teichoic acidSide 2.. Functionally, part of the ABC transporter complex TagGH involved in teichoic acids export. Responsible for energy coupling to the transport system. This chain is Teichoic acids export ATP-binding protein TagH, found in Bacillus anthracis.